We begin with the raw amino-acid sequence, 112 residues long: Large ribosomal subunit protein bL20c (112 aa).

Belongs to the bacterial ribosomal protein bL20 family.

It localises to the plastid. The protein resides in the chloroplast. Binds directly to 23S ribosomal RNA and is necessary for the in vitro assembly process of the 50S ribosomal subunit. It is not involved in the protein synthesizing functions of that subunit. The polypeptide is Large ribosomal subunit protein bL20c (rpl20) (Anthoceros angustus (Hornwort)).